The chain runs to 205 residues: Macrophage immunometabolism regulator (205 aa).

The segment at 1–40 is disordered; sequence MEVDINGVNRTNNSVPSTTEGSSPSKPDPEKPRCSSTPCS. Residues 8 to 25 show a composition bias toward polar residues; it reads VNRTNNSVPSTTEGSSPS.

The protein belongs to the UNC119-binding protein family. Interacts with unc119 family proteins; interaction preferentially takes place when unc119 proteins are unliganded with myristoylated proteins.

The protein localises to the cytoplasm. Its subcellular location is the cell projection. It is found in the cilium. May play a role in immune regulation through regulation of the macrophage function. May also play a role in trafficking of proteins via its interaction with unc119 family cargo adapters. May play a role in ciliary membrane localization. This Xenopus tropicalis (Western clawed frog) protein is Macrophage immunometabolism regulator (macir).